Consider the following 37-residue polypeptide: Large ribosomal subunit protein bL36 (37 aa).

This sequence belongs to the bacterial ribosomal protein bL36 family.

The sequence is that of Large ribosomal subunit protein bL36 from Cutibacterium acnes (strain DSM 16379 / KPA171202) (Propionibacterium acnes).